Consider the following 137-residue polypeptide: Putative transcriptional regulatory protein MJ0173 (137 aa).

This sequence belongs to the Tfx family.

In terms of biological role, putative transcriptional regulator. The polypeptide is Putative transcriptional regulatory protein MJ0173 (Methanocaldococcus jannaschii (strain ATCC 43067 / DSM 2661 / JAL-1 / JCM 10045 / NBRC 100440) (Methanococcus jannaschii)).